Here is a 265-residue protein sequence, read N- to C-terminus: 2-C-methyl-D-erythritol 4-phosphate cytidylyltransferase (265 aa).

Residues 231–241 are compositionally biased toward basic and acidic residues; it reads DRGGASREAER. Residues 231 to 265 form a disordered region; the sequence is DRGGASREAERSAMPSAATSVFSGARSAASGSEEV. The segment covering 253-265 has biased composition (low complexity); the sequence is SGARSAASGSEEV.

Belongs to the IspD/TarI cytidylyltransferase family. IspD subfamily.

It catalyses the reaction 2-C-methyl-D-erythritol 4-phosphate + CTP + H(+) = 4-CDP-2-C-methyl-D-erythritol + diphosphate. Its pathway is isoprenoid biosynthesis; isopentenyl diphosphate biosynthesis via DXP pathway; isopentenyl diphosphate from 1-deoxy-D-xylulose 5-phosphate: step 2/6. Its function is as follows. Catalyzes the formation of 4-diphosphocytidyl-2-C-methyl-D-erythritol from CTP and 2-C-methyl-D-erythritol 4-phosphate (MEP). The protein is 2-C-methyl-D-erythritol 4-phosphate cytidylyltransferase of Xanthomonas campestris pv. campestris (strain B100).